The sequence spans 335 residues: Phosphate acyltransferase (335 aa).

This sequence belongs to the PlsX family. Homodimer. Probably interacts with PlsY.

It localises to the cytoplasm. The enzyme catalyses a fatty acyl-[ACP] + phosphate = an acyl phosphate + holo-[ACP]. It participates in lipid metabolism; phospholipid metabolism. Its function is as follows. Catalyzes the reversible formation of acyl-phosphate (acyl-PO(4)) from acyl-[acyl-carrier-protein] (acyl-ACP). This enzyme utilizes acyl-ACP as fatty acyl donor, but not acyl-CoA. This Streptococcus pyogenes serotype M1 protein is Phosphate acyltransferase.